The sequence spans 210 residues: Imidazoleglycerol-phosphate dehydratase (210 aa).

This sequence belongs to the imidazoleglycerol-phosphate dehydratase family.

Its subcellular location is the cytoplasm. The enzyme catalyses D-erythro-1-(imidazol-4-yl)glycerol 3-phosphate = 3-(imidazol-4-yl)-2-oxopropyl phosphate + H2O. It participates in amino-acid biosynthesis; L-histidine biosynthesis; L-histidine from 5-phospho-alpha-D-ribose 1-diphosphate: step 6/9. This chain is Imidazoleglycerol-phosphate dehydratase, found in Mycobacterium marinum (strain ATCC BAA-535 / M).